A 122-amino-acid chain; its full sequence is Large ribosomal subunit protein bL12 (122 aa).

The protein belongs to the bacterial ribosomal protein bL12 family. Homodimer. Part of the ribosomal stalk of the 50S ribosomal subunit. Forms a multimeric L10(L12)X complex, where L10 forms an elongated spine to which 2 to 4 L12 dimers bind in a sequential fashion. Binds GTP-bound translation factors.

Forms part of the ribosomal stalk which helps the ribosome interact with GTP-bound translation factors. Is thus essential for accurate translation. This chain is Large ribosomal subunit protein bL12, found in Blochmanniella pennsylvanica (strain BPEN).